Consider the following 581-residue polypeptide: Phosphoglucomutase, cytoplasmic (581 aa).

The span at 1–11 (MVFSVAKKDTT) shows a compositional bias: basic and acidic residues. A disordered region spans residues 1–20 (MVFSVAKKDTTPYEGQKPGT). Alpha-D-glucose 1,6-bisphosphate contacts are provided by arginine 24 and serine 123. Catalysis depends on serine 123, which acts as the Phosphoserine intermediate. Residues serine 123, aspartate 298, aspartate 300, and aspartate 302 each coordinate Mg(2+). Serine 123 is modified (phosphoserine). Residues aspartate 302, arginine 303, threonine 366, glutamate 385, serine 387, and lysine 398 each coordinate alpha-D-glucose 1,6-bisphosphate.

This sequence belongs to the phosphohexose mutase family. In terms of assembly, monomer. Requires Mg(2+) as cofactor.

The protein resides in the cytoplasm. It carries out the reaction alpha-D-glucose 1-phosphate = alpha-D-glucose 6-phosphate. The enzyme catalyses O-phospho-L-seryl-[protein] + alpha-D-glucose 1-phosphate = alpha-D-glucose 1,6-bisphosphate + L-seryl-[protein]. The catalysed reaction is alpha-D-glucose 1,6-bisphosphate + L-seryl-[protein] = O-phospho-L-seryl-[protein] + alpha-D-glucose 6-phosphate. Its function is as follows. Catalyzes the reversible isomerization of alpha-D-glucose 1-phosphate to alpha-D-glucose 6-phosphate. The mechanism proceeds via the intermediate compound alpha-D-glucose 1,6-bisphosphate. This enzyme participates in both the breakdown and synthesis of glucose. The protein is Phosphoglucomutase, cytoplasmic (PGM1) of Bromus inermis (Smooth brome grass).